A 2641-amino-acid polypeptide reads, in one-letter code: Prosolanapyrone synthase (2641 aa).

Residues 14-440 (PEPIAIVGMG…GANGHCIIDD (427 aa)) form the Ketosynthase family 3 (KS3) domain. Catalysis depends on for beta-ketoacyl synthase activity residues Cys187, His323, and His363. A disordered region spans residues 456 to 515 (SIGHINGHTNGHTNGHTNGHTNGHTNGHTNGHTNGAHASDGHNGHHQNGMNGNSASHMSE). Residues 461–490 (NGHTNGHTNGHTNGHTNGHTNGHTNGHTNG) show a composition bias toward low complexity. A malonyl-CoA:ACP transacylase (MAT) region spans residues 619–920 (FVFTGQGAQW…KGPVGQISRS (302 aa)). Residues 1011 to 1149 (HDLLGSKLPG…GRVRVIAGTS (139 aa)) form an N-terminal hotdog fold region. The interval 1011–1309 (HDLLGSKLPG…GNLRCVTYTE (299 aa)) is dehydratase (DH) domain. The 303-residue stretch at 1011-1313 (HDLLGSKLPG…CVTYTEVLPS (303 aa)) folds into the PKS/mFAS DH domain. His1043 functions as the Proton acceptor; for dehydratase activity in the catalytic mechanism. A C-terminal hotdog fold region spans residues 1161-1313 (ARTLDTKAWY…CVTYTEVLPS (153 aa)). Asp1227 (proton donor; for dehydratase activity) is an active-site residue. The segment at 1477-1665 (TGAYPQLVRF…GAELVLDDYP (189 aa)) is methyltransferase (MT) domain. The tract at residues 1894–2206 (GLLTSLYFKP…KGTHVGKLVV (313 aa)) is enoyl reductase (ER) domain. Residues 2231-2408 (NYLITGGLGG…STVSFGLIRD (178 aa)) form a ketoreductase (KR) domain region. One can recognise a Carrier domain in the interval 2561 to 2639 (RTVALVTDAI…ILANKIVDGA (79 aa)). An O-(pantetheine 4'-phosphoryl)serine modification is found at Ser2598.

The protein operates within phytotoxin biosynthesis. Its function is as follows. Prosolanapyrone synthase; part of the gene cluster that mediates the biosynthesis of the phytotoxin solanapyrone, a causal agent of early blight disease of potato and tomato. The prosolanapyrone synthase sol1 is a polyketide synthase that produces the octaketide desmethylprosolanapyrone I via sequential condensations of 7 malonyl-CoA units with one acetyl-CoA unit, and one methylation step. The octaketide backbone is further methylated by the sol2 O-methyltransferase to yield prosolanapyrone I. Prosolanapyrone I is hydroxylated to prosolanapyrone II by the cytochrome P450 monooxygenase sol6. The solanapyrone synthase sol5 then catalyzes the oxidation of prosolanapyrone II and the subsequent Diels Alder cycloisomerization of the product prosolanapyrone III to solanapyrones A and D. Solanapyrones A and D are then converted into solanapyrones B and E, respectively, by the sol3 dehydrogenase. The chain is Prosolanapyrone synthase (sol1) from Alternaria solani.